The following is a 424-amino-acid chain: Histidine--tRNA ligase (424 aa).

The protein belongs to the class-II aminoacyl-tRNA synthetase family. In terms of assembly, homodimer.

Its subcellular location is the cytoplasm. It carries out the reaction tRNA(His) + L-histidine + ATP = L-histidyl-tRNA(His) + AMP + diphosphate + H(+). This is Histidine--tRNA ligase from Escherichia coli O17:K52:H18 (strain UMN026 / ExPEC).